Consider the following 488-residue polypeptide: Centrosomal protein cep57l1 (488 aa).

Residues 71–226 (LESEKTHARD…AQVQTSLEVN (156 aa)) adopt a coiled-coil conformation. Disordered regions lie at residues 232-272 (SASS…PPSK) and 311-342 (PRVSQKDPKTVEHKPSILPGGSRSIPTRLMSS). Basic residues predominate over residues 241 to 250 (RKVKKKKQSK). Basic and acidic residues-rich tracts occupy residues 259–270 (PSSKEPLSKEPP) and 314–325 (SQKDPKTVEHKP). A coiled-coil region spans residues 377–403 (KNTDMREDLERELDYLVKQMEIKSDQI). The interval 416–464 (LKKTAKKQPRPPSTTKPAEDEQNIGATDPCTPRNKGNLANGTGTPNSKA) is disordered. Positions 452-464 (NLANGTGTPNSKA) are enriched in polar residues.

It belongs to the translokin family. Interacts with clip1, mis12, ndc80 and zwint. Interacts with gamma-tubulin.

Its subcellular location is the cytoplasm. The protein resides in the cytoskeleton. It localises to the microtubule organizing center. The protein localises to the centrosome. It is found in the chromosome. Its subcellular location is the centromere. The protein resides in the kinetochore. It localises to the spindle. Functionally, required for spindle microtubule attachment to both kinetochores and centrosomes. Also functions to tether minus-ends of spindle microtubules to centrosomes. May act by forming ring-like structures around microtubules, or by serving as a cross-linker or scaffold at the attachment site. This chain is Centrosomal protein cep57l1 (cep57l1), found in Xenopus laevis (African clawed frog).